The following is a 129-amino-acid chain: Glycine cleavage system H protein (129 aa).

Residues 24–106 (TFTVGISEHA…YGDGWLFRIK (83 aa)) form the Lipoyl-binding domain. Residue lysine 65 is modified to N6-lipoyllysine.

Belongs to the GcvH family. The glycine cleavage system is composed of four proteins: P, T, L and H. (R)-lipoate is required as a cofactor.

In terms of biological role, the glycine cleavage system catalyzes the degradation of glycine. The H protein shuttles the methylamine group of glycine from the P protein to the T protein. This chain is Glycine cleavage system H protein, found in Pseudoalteromonas atlantica (strain T6c / ATCC BAA-1087).